A 174-amino-acid polypeptide reads, in one-letter code: Secreted cysteine-rich protein UMAG_00792 (174 aa).

A signal peptide spans 1 to 26 (MVSFKSSSLFLHSLSALLVLTTLSSA). N77 carries an N-linked (GlcNAc...) asparagine glycan.

As to quaternary structure, secreted cysteine-rich proteins (SCRPs) are predicted to form amyloids.

The protein resides in the secreted. In terms of biological role, secreted cysteine-rich protein that might form amyloid strutures which are involved in attachment to hydrophobic surfaces and in formation of hydrophobic aerial hyphae. The chain is Secreted cysteine-rich protein UMAG_00792 from Mycosarcoma maydis (Corn smut fungus).